A 472-amino-acid chain; its full sequence is Adenosylhomocysteinase (472 aa).

Substrate-binding residues include T64, D138, and E198. 199 to 201 (TTT) provides a ligand contact to NAD(+). Residues K228 and D232 each contribute to the substrate site. NAD(+) is bound by residues N233, 262–267 (GFGDVG), E285, N320, 341–343 (IGH), and N386.

It belongs to the adenosylhomocysteinase family. The cofactor is NAD(+).

The protein localises to the cytoplasm. It carries out the reaction S-adenosyl-L-homocysteine + H2O = L-homocysteine + adenosine. The protein operates within amino-acid biosynthesis; L-homocysteine biosynthesis; L-homocysteine from S-adenosyl-L-homocysteine: step 1/1. Its function is as follows. May play a key role in the regulation of the intracellular concentration of adenosylhomocysteine. The chain is Adenosylhomocysteinase from Prochlorococcus marinus (strain MIT 9312).